The following is a 76-amino-acid chain: MSKFFRRRKFCKFTAEGVKEIDYKDLNTLRQYLTENGKIVPSRVTGTKSKYQRQLATAVKRARFLALIPYTDNHDI.

The protein belongs to the bacterial ribosomal protein bS18 family. As to quaternary structure, part of the 30S ribosomal subunit. Forms a tight heterodimer with protein bS6.

In terms of biological role, binds as a heterodimer with protein bS6 to the central domain of the 16S rRNA, where it helps stabilize the platform of the 30S subunit. This Stenotrophomonas maltophilia (strain R551-3) protein is Small ribosomal subunit protein bS18.